The sequence spans 318 residues: Acetyl-coenzyme A carboxylase carboxyl transferase subunit alpha (318 aa).

The 258-residue stretch at 36 to 293 (EIDRLKEKST…KTRLSEQLDQ (258 aa)) folds into the CoA carboxyltransferase C-terminal domain.

The protein belongs to the AccA family. Acetyl-CoA carboxylase is a heterohexamer composed of biotin carboxyl carrier protein (AccB), biotin carboxylase (AccC) and two subunits each of ACCase subunit alpha (AccA) and ACCase subunit beta (AccD).

Its subcellular location is the cytoplasm. It catalyses the reaction N(6)-carboxybiotinyl-L-lysyl-[protein] + acetyl-CoA = N(6)-biotinyl-L-lysyl-[protein] + malonyl-CoA. It participates in lipid metabolism; malonyl-CoA biosynthesis; malonyl-CoA from acetyl-CoA: step 1/1. Functionally, component of the acetyl coenzyme A carboxylase (ACC) complex. First, biotin carboxylase catalyzes the carboxylation of biotin on its carrier protein (BCCP) and then the CO(2) group is transferred by the carboxyltransferase to acetyl-CoA to form malonyl-CoA. The polypeptide is Acetyl-coenzyme A carboxylase carboxyl transferase subunit alpha (Teredinibacter turnerae (strain ATCC 39867 / T7901)).